A 206-amino-acid polypeptide reads, in one-letter code: Histidine biosynthesis bifunctional protein HisIE (206 aa).

Residues 1–114 (MLKKINFIDI…FQVPSENLFF (114 aa)) are phosphoribosyl-AMP cyclohydrolase. The tract at residues 115–206 (LHDLDCMLKF…NLKMRSNKQV (92 aa)) is phosphoribosyl-ATP pyrophosphohydrolase.

The protein in the N-terminal section; belongs to the PRA-CH family. This sequence in the C-terminal section; belongs to the PRA-PH family.

The protein localises to the cytoplasm. The catalysed reaction is 1-(5-phospho-beta-D-ribosyl)-ATP + H2O = 1-(5-phospho-beta-D-ribosyl)-5'-AMP + diphosphate + H(+). The enzyme catalyses 1-(5-phospho-beta-D-ribosyl)-5'-AMP + H2O = 1-(5-phospho-beta-D-ribosyl)-5-[(5-phospho-beta-D-ribosylamino)methylideneamino]imidazole-4-carboxamide. The protein operates within amino-acid biosynthesis; L-histidine biosynthesis; L-histidine from 5-phospho-alpha-D-ribose 1-diphosphate: step 2/9. It functions in the pathway amino-acid biosynthesis; L-histidine biosynthesis; L-histidine from 5-phospho-alpha-D-ribose 1-diphosphate: step 3/9. This is Histidine biosynthesis bifunctional protein HisIE (hisI) from Buchnera aphidicola subsp. Baizongia pistaciae (strain Bp).